The primary structure comprises 909 residues: UPF0182 protein H16_A1615 (909 aa).

Helical transmembrane passes span 16–36 (TWVVAVIVALIAVSRVTGLVV), 58–78 (ALLFLAVFAVSAGALWLSGWL), 114–134 (VAVLVGLLMAVGELSSWAIAL), 169–189 (WLLLLLGCSAVLAGVVYGLRG), 205–225 (ATHGSALLGLFFALQAWSYWL), 246–266 (VHVGLPVLWLQVGLAAAAAAA), and 281–301 (AAALLVVGSAIVLGTIWPALF).

Belongs to the UPF0182 family.

The protein localises to the cell membrane. This is UPF0182 protein H16_A1615 from Cupriavidus necator (strain ATCC 17699 / DSM 428 / KCTC 22496 / NCIMB 10442 / H16 / Stanier 337) (Ralstonia eutropha).